A 203-amino-acid chain; its full sequence is CASP-like protein 4B2 (203 aa).

Topologically, residues 1–57 (MAMVTADASAAADAATKQPDVEKDYSSYNGASTAGAGGGGVVESVVARWRREDMLDK) are cytoplasmic. The chain crosses the membrane as a helical span at residues 58–78 (CPLALHAAAAAFAFVALVLVA). Residues 79–92 (SNQHGDWMQFDRYQ) are Extracellular-facing. Residues 93–113 (EYMYLLAIAALAFAYSLAQAL) form a helical membrane-spanning segment. At 114–135 (RHAHRMRGGADPIPAPSARLFD) the chain is on the cytoplasmic side. A helical transmembrane segment spans residues 136-156 (FIADQVVAYLLMSALSAAIPI). The Extracellular segment spans residues 157-171 (TNRMRTAVINNFTDA). N-linked (GlcNAc...) asparagine glycosylation is present at N167. A helical membrane pass occupies residues 172 to 192 (TAAAISMAFLAFVALALSATV). Residues 193–203 (SGYKLSRQMYM) are Cytoplasmic-facing.

This sequence belongs to the Casparian strip membrane proteins (CASP) family. As to quaternary structure, homodimer and heterodimers.

Its subcellular location is the cell membrane. This chain is CASP-like protein 4B2, found in Hordeum vulgare subsp. vulgare (Domesticated barley).